Here is a 274-residue protein sequence, read N- to C-terminus: Large ribosomal subunit protein uL2cz/uL2cy (274 aa).

2 disordered regions span residues 1–22 (MAIHLYKTSTPSTRNGAVDSQV) and 225–274 (PVDH…RRSK).

Belongs to the universal ribosomal protein uL2 family. Part of the 50S ribosomal subunit.

Its subcellular location is the plastid. It localises to the chloroplast. This Arabis hirsuta (Hairy rock-cress) protein is Large ribosomal subunit protein uL2cz/uL2cy (rpl2-A).